Reading from the N-terminus, the 220-residue chain is PKHD-type hydroxylase sync_1544 (220 aa).

Residues lysine 79–serine 173 enclose the Fe2OG dioxygenase domain. 3 residues coordinate Fe cation: histidine 97, aspartate 99, and histidine 154. Arginine 164 contributes to the 2-oxoglutarate binding site.

Fe(2+) is required as a cofactor. Requires L-ascorbate as cofactor.

This Synechococcus sp. (strain CC9311) protein is PKHD-type hydroxylase sync_1544.